A 343-amino-acid polypeptide reads, in one-letter code: tRNA N6-adenosine threonylcarbamoyltransferase (343 aa).

Residues histidine 120 and histidine 124 each coordinate Fe cation. Substrate is bound by residues 142–146, aspartate 175, glycine 188, aspartate 192, and asparagine 281; that span reads VVSGG. Aspartate 310 is a Fe cation binding site.

It belongs to the KAE1 / TsaD family. Fe(2+) serves as cofactor.

The protein localises to the cytoplasm. The enzyme catalyses L-threonylcarbamoyladenylate + adenosine(37) in tRNA = N(6)-L-threonylcarbamoyladenosine(37) in tRNA + AMP + H(+). Functionally, required for the formation of a threonylcarbamoyl group on adenosine at position 37 (t(6)A37) in tRNAs that read codons beginning with adenine. Is involved in the transfer of the threonylcarbamoyl moiety of threonylcarbamoyl-AMP (TC-AMP) to the N6 group of A37, together with TsaE and TsaB. TsaD likely plays a direct catalytic role in this reaction. The chain is tRNA N6-adenosine threonylcarbamoyltransferase from Bacillus thuringiensis subsp. konkukian (strain 97-27).